We begin with the raw amino-acid sequence, 178 residues long: 2-C-methyl-D-erythritol 2,4-cyclodiphosphate synthase (178 aa).

A divalent metal cation is bound by residues D24, H26, and H61. Residue 24-26 (DSH) participates in 4-CDP-2-C-methyl-D-erythritol 2-phosphate binding. 150–153 (TSGE) is a 4-CDP-2-C-methyl-D-erythritol 2-phosphate binding site.

It belongs to the IspF family. In terms of assembly, homotrimer. The cofactor is a divalent metal cation.

The catalysed reaction is 4-CDP-2-C-methyl-D-erythritol 2-phosphate = 2-C-methyl-D-erythritol 2,4-cyclic diphosphate + CMP. The protein operates within isoprenoid biosynthesis; isopentenyl diphosphate biosynthesis via DXP pathway; isopentenyl diphosphate from 1-deoxy-D-xylulose 5-phosphate: step 4/6. Involved in the biosynthesis of isopentenyl diphosphate (IPP) and dimethylallyl diphosphate (DMAPP), two major building blocks of isoprenoid compounds. Catalyzes the conversion of 4-diphosphocytidyl-2-C-methyl-D-erythritol 2-phosphate (CDP-ME2P) to 2-C-methyl-D-erythritol 2,4-cyclodiphosphate (ME-CPP) with a corresponding release of cytidine 5-monophosphate (CMP). This Chlamydia trachomatis serovar A (strain ATCC VR-571B / DSM 19440 / HAR-13) protein is 2-C-methyl-D-erythritol 2,4-cyclodiphosphate synthase.